We begin with the raw amino-acid sequence, 285 residues long: 2-dehydro-3-deoxyphosphooctonate aldolase (285 aa).

It belongs to the KdsA family.

It is found in the cytoplasm. It catalyses the reaction D-arabinose 5-phosphate + phosphoenolpyruvate + H2O = 3-deoxy-alpha-D-manno-2-octulosonate-8-phosphate + phosphate. It participates in carbohydrate biosynthesis; 3-deoxy-D-manno-octulosonate biosynthesis; 3-deoxy-D-manno-octulosonate from D-ribulose 5-phosphate: step 2/3. Its pathway is bacterial outer membrane biogenesis; lipopolysaccharide biosynthesis. In Acidovorax sp. (strain JS42), this protein is 2-dehydro-3-deoxyphosphooctonate aldolase.